Reading from the N-terminus, the 740-residue chain is Eukaryotic translation initiation factor 3 subunit B (740 aa).

Polar residues predominate over residues 1 to 10 (MAPSFDTLSE). The segment at 1–20 (MAPSFDTLSEQDLHEEEEEE) is disordered. In terms of domain architecture, RRM spans 40 to 126 (TFVVIDGLPV…HTLLVNKLMD (87 aa)). WD repeat units lie at residues 193–230 (AHWT…KQKQ), 232–289 (PHPF…RSFV), 302–343 (EPKK…LLGK), 455–496 (SLKD…SFFA), 513–556 (IEKK…EKPE), and 571–609 (TEHY…HTFA). The interval 696–721 (AYGLPEEADDPKLAKDAAATTQEQGE) is disordered.

Belongs to the eIF-3 subunit B family. In terms of assembly, component of the eukaryotic translation initiation factor 3 (eIF-3) complex.

It localises to the cytoplasm. RNA-binding component of the eukaryotic translation initiation factor 3 (eIF-3) complex, which is involved in protein synthesis of a specialized repertoire of mRNAs and, together with other initiation factors, stimulates binding of mRNA and methionyl-tRNAi to the 40S ribosome. The eIF-3 complex specifically targets and initiates translation of a subset of mRNAs involved in cell proliferation. The sequence is that of Eukaryotic translation initiation factor 3 subunit B (prt1) from Aspergillus fumigatus (strain ATCC MYA-4609 / CBS 101355 / FGSC A1100 / Af293) (Neosartorya fumigata).